Reading from the N-terminus, the 1131-residue chain is DNA polymerase II large subunit (1131 aa).

It belongs to the archaeal DNA polymerase II family. In terms of assembly, heterodimer of a large subunit and a small subunit.

It catalyses the reaction DNA(n) + a 2'-deoxyribonucleoside 5'-triphosphate = DNA(n+1) + diphosphate. The enzyme catalyses Exonucleolytic cleavage in the 3'- to 5'-direction to yield nucleoside 5'-phosphates.. Possesses two activities: a DNA synthesis (polymerase) and an exonucleolytic activity that degrades single-stranded DNA in the 3'- to 5'-direction. Has a template-primer preference which is characteristic of a replicative DNA polymerase. The polypeptide is DNA polymerase II large subunit (Methanococcus maripaludis (strain C5 / ATCC BAA-1333)).